A 504-amino-acid chain; its full sequence is Maturase K (504 aa).

Belongs to the intron maturase 2 family. MatK subfamily.

It localises to the plastid. It is found in the chloroplast. Functionally, usually encoded in the trnK tRNA gene intron. Probably assists in splicing its own and other chloroplast group II introns. This is Maturase K from Matthiola incana (Common stock).